We begin with the raw amino-acid sequence, 557 residues long: Dihydroxy-acid dehydratase (557 aa).

Position 50 (cysteine 50) interacts with [2Fe-2S] cluster. Position 82 (aspartate 82) interacts with Mg(2+). Cysteine 123 is a binding site for [2Fe-2S] cluster. Residues aspartate 124 and lysine 125 each contribute to the Mg(2+) site. At lysine 125 the chain carries N6-carboxylysine. Cysteine 195 serves as a coordination point for [2Fe-2S] cluster. Glutamate 447 provides a ligand contact to Mg(2+). Serine 473 (proton acceptor) is an active-site residue.

It belongs to the IlvD/Edd family. Homodimer. Requires [2Fe-2S] cluster as cofactor. Mg(2+) serves as cofactor.

It catalyses the reaction (2R)-2,3-dihydroxy-3-methylbutanoate = 3-methyl-2-oxobutanoate + H2O. The enzyme catalyses (2R,3R)-2,3-dihydroxy-3-methylpentanoate = (S)-3-methyl-2-oxopentanoate + H2O. It participates in amino-acid biosynthesis; L-isoleucine biosynthesis; L-isoleucine from 2-oxobutanoate: step 3/4. It functions in the pathway amino-acid biosynthesis; L-valine biosynthesis; L-valine from pyruvate: step 3/4. Functionally, functions in the biosynthesis of branched-chain amino acids. Catalyzes the dehydration of (2R,3R)-2,3-dihydroxy-3-methylpentanoate (2,3-dihydroxy-3-methylvalerate) into 2-oxo-3-methylpentanoate (2-oxo-3-methylvalerate) and of (2R)-2,3-dihydroxy-3-methylbutanoate (2,3-dihydroxyisovalerate) into 2-oxo-3-methylbutanoate (2-oxoisovalerate), the penultimate precursor to L-isoleucine and L-valine, respectively. This Burkholderia thailandensis (strain ATCC 700388 / DSM 13276 / CCUG 48851 / CIP 106301 / E264) protein is Dihydroxy-acid dehydratase.